The following is a 370-amino-acid chain: Protein phosphatase 2C homolog 2 (370 aa).

Residues 23–291 (HFGVSHMQGW…DNMTICIVAF (269 aa)) enclose the PPM-type phosphatase domain. Residues aspartate 63, glycine 64, aspartate 233, and aspartate 282 each contribute to the Mn(2+) site. Serine 355 and serine 357 each carry phosphoserine.

This sequence belongs to the PP2C family. In terms of assembly, monomer. Mg(2+) is required as a cofactor. The cofactor is Mn(2+).

Its subcellular location is the nucleus. It is found in the cytoplasm. The protein localises to the cytosol. It carries out the reaction O-phospho-L-seryl-[protein] + H2O = L-seryl-[protein] + phosphate. It catalyses the reaction O-phospho-L-threonyl-[protein] + H2O = L-threonyl-[protein] + phosphate. Its activity is regulated as follows. Activity is reduced when phosphosrylated at Ser-355/Ser-357. Functionally, dephosphorylating regulator for many key proteins. Has an important role in osmotic stability and cell shape control. It may negatively regulate the osmosensing signal transmitted through wis1 map kinase. In Schizosaccharomyces pombe (strain 972 / ATCC 24843) (Fission yeast), this protein is Protein phosphatase 2C homolog 2 (ptc2).